We begin with the raw amino-acid sequence, 454 residues long: Phosphoglucosamine mutase (454 aa).

Catalysis depends on S104, which acts as the Phosphoserine intermediate. Mg(2+)-binding residues include S104, D241, D243, and D245. Position 104 is a phosphoserine (S104).

Belongs to the phosphohexose mutase family. It depends on Mg(2+) as a cofactor. In terms of processing, activated by phosphorylation.

The enzyme catalyses alpha-D-glucosamine 1-phosphate = D-glucosamine 6-phosphate. In terms of biological role, catalyzes the conversion of glucosamine-6-phosphate to glucosamine-1-phosphate. This is Phosphoglucosamine mutase from Paenarthrobacter aurescens (strain TC1).